A 196-amino-acid chain; its full sequence is Proteasome subunit beta 1 (196 aa).

Positions methionine 1–alanine 6 are cleaved as a propeptide — removed in mature form; by autocatalysis. Catalysis depends on threonine 7, which acts as the Nucleophile.

It belongs to the peptidase T1B family. In terms of assembly, the 20S proteasome core is composed of 14 alpha and 14 beta subunits that assemble into four stacked heptameric rings, resulting in a barrel-shaped structure. The two inner rings, each composed of seven catalytic beta subunits, are sandwiched by two outer rings, each composed of seven alpha subunits. The catalytic chamber with the active sites is on the inside of the barrel. Has a gated structure, the ends of the cylinder being occluded by the N-termini of the alpha-subunits. Is capped at one or both ends by the proteasome regulatory ATPase, PAN.

It localises to the cytoplasm. It carries out the reaction Cleavage of peptide bonds with very broad specificity.. The formation of the proteasomal ATPase PAN-20S proteasome complex, via the docking of the C-termini of PAN into the intersubunit pockets in the alpha-rings, triggers opening of the gate for substrate entry. Interconversion between the open-gate and close-gate conformations leads to a dynamic regulation of the 20S proteasome proteolysis activity. Functionally, component of the proteasome core, a large protease complex with broad specificity involved in protein degradation. This Saccharolobus islandicus (strain Y.N.15.51 / Yellowstone #2) (Sulfolobus islandicus) protein is Proteasome subunit beta 1.